Consider the following 592-residue polypeptide: Syntaxin-binding protein 3 (592 aa).

The tract at residues 1-255 (MAPPVAERGL…STVLHELTFQ (255 aa)) is mediates interaction with DOC2B.

It belongs to the STXBP/unc-18/SEC1 family. As to quaternary structure, interacts with DOC2B; the interaction is direct, occurs at the cell membrane, excludes interaction with STX4 and regulates glucose-stimulated insulin secretion. Interacts with STX4. Post-translationally, phosphorylated by PKC in platelets in response to thrombin stimulation; phosphorylation inhibits binding to STX4. Megakaryocytes and platelets.

Its subcellular location is the cytoplasm. It is found in the cytosol. The protein resides in the cell membrane. Functionally, together with STX4 and VAMP2, may play a role in insulin-dependent movement of GLUT4 and in docking/fusion of intracellular GLUT4-containing vesicles with the cell surface in adipocytes. The sequence is that of Syntaxin-binding protein 3 (STXBP3) from Homo sapiens (Human).